Consider the following 58-residue polypeptide: Mastoparan-VT7 (58 aa).

The first 27 residues, 1 to 27, serve as a signal peptide directing secretion; sequence MKNTILILFTAFIALLGFFGMSAEALA. AXPX repeat units lie at residues 27–30, 31–34, 35–38, and 41–44; these read ADPK, ADPL, AGPN, and ADPE. Residues 28-45 constitute a propeptide that is removed on maturation; the sequence is DPKADPLAGPNPDADPEA.

This sequence belongs to the MCD family. Mastoparan subfamily. In terms of tissue distribution, expressed by the venom gland.

It localises to the secreted. Functionally, the synthetic peptide shows antimicrobial activities against Gram-negative bacteria (but not against all strains tested), Gram-positive bacteria (all strains tested) and the fungi C.albicans (but not C.parapsilosis). Exhibits little hemolytic activity against washed human erythrocytes. The sequence is that of Mastoparan-VT7 from Vespa tropica (Greater banded hornet).